We begin with the raw amino-acid sequence, 1181 residues long: Sodium/potassium/calcium exchanger 1 (1181 aa).

The Extracellular segment spans residues 1-419 (MGKLIRMGTQ…DLFSVEDRRQ (419 aa)). Disordered stretches follow at residues 107-232 (AMED…TSLK), 255-276 (SLVG…STTP), and 300-323 (STPA…GTST). The segment covering 124–136 (SLKNNYSPTTAGT) has biased composition (polar residues). Residue asparagine 271 is glycosylated (N-linked (GlcNAc...) asparagine). A compositionally biased stretch (polar residues) spans 301 to 311 (TPATTEGSTAA). The helical transmembrane segment at 420-440 (GWVVLHIFGMTYVFVALAIVC) threads the bilayer. Residues 441 to 464 (DEYFVPALGVITDKLQISEDVAGA) are Cytoplasmic-facing. An Alpha-1 repeat occupies 461-501 (VAGATFMAAGGSAPELFTSLIGVFISHSNVGIGTIVGSAVF). A helical membrane pass occupies residues 465–485 (TFMAAGGSAPELFTSLIGVFI). Residues 486-491 (SHSNVG) lie on the Extracellular side of the membrane. The chain crosses the membrane as a helical span at residues 492–512 (IGTIVGSAVFNILFVIGTCAL). Residues 513 to 519 (FSREILN) lie on the Cytoplasmic side of the membrane. A helical transmembrane segment spans residues 520 to 544 (LTWWPLFRDVSFYILDLSMLIVFFL). Residues 545 to 552 (DSLIAWWE) lie on the Extracellular side of the membrane. Residues 553–569 (SLLLLLAYALYVFTMKW) traverse the membrane as a helical segment. Residues 570–989 (NKQIERWVKE…SLEWPESRQK (420 aa)) lie on the Cytoplasmic side of the membrane. The tract at residues 598 to 617 (PSDGAIEENEQQDNKKLKLP) is disordered. Serine 625 carries the phosphoserine modification. The tract at residues 650 to 983 (GEARPSKDKQ…ESEEPLSLEW (334 aa)) is disordered. The residue at position 690 (threonine 690) is a Phosphothreonine. The span at 701–715 (GDQEEDPGCQEDVDE) shows a compositional bias: acidic residues. Tandem repeats lie at residues 730 to 741 (ETEAEGKKDEEG), 742 to 754 (ETEA…GQEE), 755 to 766 (ETETKGKEKQEG), 767 to 778 (ETESEGKDEQEG), 779 to 791 (ETEA…DHEG), 792 to 804 (ETEA…EHEG), 805 to 817 (ETEA…EQEG), 818 to 830 (ETEA…EQEG), 831 to 843 (ETEA…EHEV), 844 to 856 (ETEA…NHEG), 857 to 869 (ETEA…DHEG), 870 to 881 (ETEAEGNVEHQG), 882 to 893 (ETEAEGKVEHEG), and 894 to 905 (ETEAGEKDEHEG). Composition is skewed to basic and acidic residues over residues 730–750 (ETEA…RKED), 757–775 (ETKG…GKDE), and 782–805 (AEGK…HEGE). The interval 730–905 (ETEAEGKKDE…EAGEKDEHEG (176 aa)) is 14 X approximate tandem repeats. Over residues 806–820 (TEAEGTEDEQEGETE) the composition is skewed to acidic residues. Residues 834 to 906 (AEGKEVEHEV…AGEKDEHEGQ (73 aa)) are compositionally biased toward basic and acidic residues. Acidic residues-rich tracts occupy residues 921–931 (GEAEANAEDQC) and 949–979 (GDSE…EEPL). Residues 990 to 1010 (QAIYLFLLPIVFPLWLTIPDV) traverse the membrane as a helical segment. The Extracellular portion of the chain corresponds to 1011 to 1017 (RRQEARK). Residues 1018–1038 (FFVITFLGSIIWIAMFSYLMV) form a helical membrane-spanning segment. Residues 1039-1053 (WWAHQVGETIGISEE) are Cytoplasmic-facing. The chain crosses the membrane as a helical span at residues 1054–1074 (IMGLTILAAGTSIPDLITSVI). One copy of the Alpha-2 repeat lies at 1061–1092 (AAGTSIPDLITSVIVARKGLGDMAVSSSVGSN). Topologically, residues 1075 to 1092 (VARKGLGDMAVSSSVGSN) are extracellular. A helical membrane pass occupies residues 1093–1113 (IFDITVGLPVPWLLFSLINAL). Over 1114–1121 (QPIPVSSN) the chain is Cytoplasmic. A helical transmembrane segment spans residues 1122-1142 (GLFCAIVLLFLMLLFVIFSIA). Residues 1143–1150 (SCKWRMNK) are Extracellular-facing. A helical transmembrane segment spans residues 1151–1171 (ILGFTMFLLYFVFLVISVMLE). Residues 1172–1181 (DRIISCPVSV) lie on the Cytoplasmic side of the membrane.

It belongs to the Ca(2+):cation antiporter (CaCA) (TC 2.A.19) family. SLC24A subfamily. The uncleaved signal sequence is required for efficient membrane targeting and proper membrane integration and topology. In terms of tissue distribution, highly expressed in the eye.

The protein resides in the cell membrane. The enzyme catalyses Ca(2+)(out) + K(+)(out) + 4 Na(+)(in) = Ca(2+)(in) + K(+)(in) + 4 Na(+)(out). Functionally, calcium, potassium:sodium antiporter that transports 1 Ca(2+) and 1 K(+) in exchange for 4 Na(+). Critical component of the visual transduction cascade, controlling the calcium concentration of outer segments during light and darkness. Light causes a rapid lowering of cytosolic free calcium in the outer segment of both retinal rod and cone photoreceptors and the light-induced lowering of calcium is caused by extrusion via this protein which plays a key role in the process of light adaptation. The chain is Sodium/potassium/calcium exchanger 1 (Slc24a1) from Rattus norvegicus (Rat).